Here is a 732-residue protein sequence, read N- to C-terminus: E3 ubiquitin-protein ligase RNF19B (732 aa).

The interval 1–109 is disordered; it reads MGSEKDSESP…PEEDEAAEGG (109 aa). The required for ubiquitin ligase activity and for protection against staurosporin-induced cell death stretch occupies residues 1–315; sequence MGSEKDSESP…VCGCEFCWLC (315 aa). Pro residues predominate over residues 54–71; the sequence is AEPPPPAAPPPPPPPAPA. Residues 72–99 are compositionally biased toward low complexity; sequence PVEAQAPPVEALPSEPAAEAEAEAVAAG. Over residues 100–109 the composition is skewed to acidic residues; that stretch reads PEEDEAAEGG. The segment at 112–334 is TRIAD supradomain; it reads EEVECPLCLV…LSPSGCTFWG (223 aa). Positions 116, 119, 139, 142, 203, 208, 225, 230, 235, 238, 243, 248, 284, and 287 each coordinate Zn(2+). Residues 116-165 form an RING-type 1 zinc finger; it reads CPLCLVRLPPERAPRLLSCPHRSCRDCLRHYLRLEISESRVPISCPECSE. The IBR-type zinc-finger motif lies at 183–248; the sequence is HKYEEFMLRR…KQIWHPNQTC (66 aa). The RING-type 2; atypical zinc finger occupies 284-315; that stretch reads CPRCSAYIIKMNDGSCNHMTCAVCGCEFCWLC. Cys299 is a catalytic residue. Residues Cys304, Cys307, Cys312, Cys315, His323, and Cys330 each coordinate Zn(2+). The next 2 helical transmembrane spans lie at 351–371 and 412–432; these read LIGA…AMVI and VIAA…VYGV. 2 disordered regions span residues 598–644 and 660–732; these read QLVS…QSCE and QPES…YEVE. A compositionally biased stretch (acidic residues) spans 674–683; sequence QSDDVPDITS.

The protein belongs to the RBR family. RNF19 subfamily. Interacts with UBE2L3, UBE2L6 and UCKL1. In terms of tissue distribution, expressed specifically in natural killer cells, activated macrophages and cytotoxic T-cells. Present in macrophages (at protein level). Ubiquitously expressed with high expression in testis.

It is found in the cytoplasmic granule membrane. It localises to the endoplasmic reticulum membrane. The catalysed reaction is [E2 ubiquitin-conjugating enzyme]-S-ubiquitinyl-L-cysteine + [acceptor protein]-L-lysine = [E2 ubiquitin-conjugating enzyme]-L-cysteine + [acceptor protein]-N(6)-ubiquitinyl-L-lysine.. Its pathway is protein modification; protein ubiquitination. In terms of biological role, E3 ubiquitin-protein ligase which accepts ubiquitin from E2 ubiquitin-conjugating enzymes UBE2L3 and UBE2L6 in the form of a thioester and then directly transfers the ubiquitin to targeted substrates, such as UCKL1. Involved in the cytolytic activity of natural killer cells and cytotoxic T-cells. Protects against staurosporin-induced cell death. The sequence is that of E3 ubiquitin-protein ligase RNF19B (Rnf19b) from Mus musculus (Mouse).